The sequence spans 549 residues: Chaperonin GroEL (549 aa).

Residues 30-33, K51, 87-91, G415, 479-481, and D495 each bind ATP; these read TLGP, DGTTT, and NAA.

Belongs to the chaperonin (HSP60) family. As to quaternary structure, forms a cylinder of 14 subunits composed of two heptameric rings stacked back-to-back. Interacts with the co-chaperonin GroES.

The protein resides in the cytoplasm. It carries out the reaction ATP + H2O + a folded polypeptide = ADP + phosphate + an unfolded polypeptide.. Its function is as follows. Together with its co-chaperonin GroES, plays an essential role in assisting protein folding. The GroEL-GroES system forms a nano-cage that allows encapsulation of the non-native substrate proteins and provides a physical environment optimized to promote and accelerate protein folding. This chain is Chaperonin GroEL, found in Stenotrophomonas maltophilia (strain R551-3).